A 258-amino-acid chain; its full sequence is Imidazole glycerol phosphate synthase subunit HisF (258 aa).

Residues D11 and D130 contribute to the active site.

It belongs to the HisA/HisF family. Heterodimer of HisH and HisF.

It localises to the cytoplasm. The catalysed reaction is 5-[(5-phospho-1-deoxy-D-ribulos-1-ylimino)methylamino]-1-(5-phospho-beta-D-ribosyl)imidazole-4-carboxamide + L-glutamine = D-erythro-1-(imidazol-4-yl)glycerol 3-phosphate + 5-amino-1-(5-phospho-beta-D-ribosyl)imidazole-4-carboxamide + L-glutamate + H(+). Its pathway is amino-acid biosynthesis; L-histidine biosynthesis; L-histidine from 5-phospho-alpha-D-ribose 1-diphosphate: step 5/9. In terms of biological role, IGPS catalyzes the conversion of PRFAR and glutamine to IGP, AICAR and glutamate. The HisF subunit catalyzes the cyclization activity that produces IGP and AICAR from PRFAR using the ammonia provided by the HisH subunit. This chain is Imidazole glycerol phosphate synthase subunit HisF, found in Xanthomonas oryzae pv. oryzae (strain MAFF 311018).